A 110-amino-acid chain; its full sequence is MEMTLFLNESYIFHRLRMWSIVLWHSCVFVCAECGNANYRVPRCLIKPFSVPVTFPFSVKKNIRILDLDPRTEAYCLSPYSVCSKRLPCKKYFYLLNSYNIKRVLGVVYC.

This sequence belongs to the UPF0377 family.

The sequence is that of Putative UPF0377 protein YIR040C from Saccharomyces cerevisiae (strain ATCC 204508 / S288c) (Baker's yeast).